Consider the following 338-residue polypeptide: Fructose-1,6-bisphosphatase class 1 (338 aa).

4 residues coordinate Mg(2+): glutamate 94, aspartate 116, leucine 118, and aspartate 119. Substrate contacts are provided by residues 119-122 (DGSS), asparagine 210, and lysine 276. A Mg(2+)-binding site is contributed by glutamate 282.

It belongs to the FBPase class 1 family. As to quaternary structure, homotetramer. Requires Mg(2+) as cofactor.

Its subcellular location is the cytoplasm. It catalyses the reaction beta-D-fructose 1,6-bisphosphate + H2O = beta-D-fructose 6-phosphate + phosphate. It functions in the pathway carbohydrate biosynthesis; gluconeogenesis. In Burkholderia mallei (strain NCTC 10247), this protein is Fructose-1,6-bisphosphatase class 1.